A 64-amino-acid chain; its full sequence is Putative antitoxin VapB51 (64 aa).

Its function is as follows. Possibly the antitoxin component of a type II toxin-antitoxin (TA) system. Its cognate toxin is VapC51. The protein is Putative antitoxin VapB51 of Mycobacterium tuberculosis (strain ATCC 25618 / H37Rv).